Consider the following 184-residue polypeptide: GMP synthase [glutamine-hydrolyzing] subunit A (184 aa).

Residues 3–184 (PICVVNNYGQ…YENFDAICTE (182 aa)) enclose the Glutamine amidotransferase type-1 domain. Cys75 functions as the Nucleophile in the catalytic mechanism. Residues His162 and Glu164 contribute to the active site.

Heterodimer composed of a glutamine amidotransferase subunit (A) and a GMP-binding subunit (B).

The catalysed reaction is XMP + L-glutamine + ATP + H2O = GMP + L-glutamate + AMP + diphosphate + 2 H(+). The protein operates within purine metabolism; GMP biosynthesis; GMP from XMP (L-Gln route): step 1/1. In terms of biological role, catalyzes the synthesis of GMP from XMP. This Methanoregula boonei (strain DSM 21154 / JCM 14090 / 6A8) protein is GMP synthase [glutamine-hydrolyzing] subunit A.